The chain runs to 427 residues: Glutamate-1-semialdehyde 2,1-aminomutase (427 aa).

Lysine 265 carries the N6-(pyridoxal phosphate)lysine modification.

It belongs to the class-III pyridoxal-phosphate-dependent aminotransferase family. HemL subfamily. In terms of assembly, homodimer. Requires pyridoxal 5'-phosphate as cofactor.

The protein resides in the cytoplasm. The catalysed reaction is (S)-4-amino-5-oxopentanoate = 5-aminolevulinate. It participates in porphyrin-containing compound metabolism; protoporphyrin-IX biosynthesis; 5-aminolevulinate from L-glutamyl-tRNA(Glu): step 2/2. In Pseudomonas putida (strain W619), this protein is Glutamate-1-semialdehyde 2,1-aminomutase.